The chain runs to 270 residues: UPF0246 protein Psyc_0554 (270 aa).

It belongs to the UPF0246 family.

This chain is UPF0246 protein Psyc_0554, found in Psychrobacter arcticus (strain DSM 17307 / VKM B-2377 / 273-4).